The chain runs to 361 residues: Tegument protein UL51 homolog (361 aa).

Cys-8 carries the S-palmitoyl cysteine; by host lipid modification. The disordered stretch occupies residues 251–299 (GDEEDEVTVMSPSPEPVQQQPPVEPVQQQPQGRGSHRRRYKESAPQETL). Low complexity predominate over residues 266-281 (PVQQQPPVEPVQQQPQ).

The protein belongs to the herpesviridae UL51 family. Oligomerizes. Interacts with UL103; this interaction mediates UL103 incorporation to virions. Post-translationally, phosphorylated. Palmitoylation is necessary for Golgi localization.

It is found in the virion tegument. The protein localises to the host cytoplasm. Its subcellular location is the host Golgi apparatus. Functionally, plays several roles during the time course of infection, including egress of virus particles from the perinuclear space and secondary envelopment of cytoplasmic capsids that bud into specific trans-Golgi network (TGN)-derived membranes. This is Tegument protein UL51 homolog (UL71) from Homo sapiens (Human).